Here is a 529-residue protein sequence, read N- to C-terminus: Peptide chain release factor 3 (529 aa).

The tr-type G domain maps to N11–Q280. Residues S20 to T27, D88 to H92, and N142 to D145 contribute to the GTP site.

It belongs to the TRAFAC class translation factor GTPase superfamily. Classic translation factor GTPase family. PrfC subfamily.

It localises to the cytoplasm. In terms of biological role, increases the formation of ribosomal termination complexes and stimulates activities of RF-1 and RF-2. It binds guanine nucleotides and has strong preference for UGA stop codons. It may interact directly with the ribosome. The stimulation of RF-1 and RF-2 is significantly reduced by GTP and GDP, but not by GMP. This chain is Peptide chain release factor 3 (prfC), found in Pasteurella multocida (strain Pm70).